A 476-amino-acid polypeptide reads, in one-letter code: MRQSSENSQNLYLYNTATRTKELFSASNAPVKLYTCGPTVYDYAHIGNFRTYVFEDLLKRTLLFFGYSVKHIMNITDVDDKTLAGACRKNISLEEYTAPFIQAFFEDIAELNILPADVYPHATHYIPQMIKAIQKLLDENIAYIGQDSSVYFSIKKFPTYGKLSQLKLQDLQCCSRVTSDEYDKENLSDFVLWKAYDEQRDGHIYWESPFGKGRPGWHLECSIMAMELLGSSIDIHAGGVDNIFPHHENEIAQSESLSHKPFSRYWLHSEHLLVDGKKMSKSLGNFFTLRNLLDRGFSGEEIRYLLLQSHYRMQLNFTEEGLLACRQALKRLRDFISRLENPYPESTTISDEIDQQGKTFLKAFSDSIANDLNIAAALAALFDFIHQTNSFIDKSKFTQADANYILDLLKKINTVLGILQFSATQEIPDEVMQLVEKREVARREKNWAQADAFRDQVASLGYLIEDSKSGPKVKKL.

Zn(2+) is bound at residue Cys36. The 'HIGH' region signature appears at 38 to 48; it reads PTVYDYAHIGN. Zn(2+)-binding residues include Cys221, His246, and Glu250. Residues 278-282 carry the 'KMSKS' region motif; sequence KMSKS. Lys281 contacts ATP.

Belongs to the class-I aminoacyl-tRNA synthetase family. As to quaternary structure, monomer. Zn(2+) is required as a cofactor.

Its subcellular location is the cytoplasm. It catalyses the reaction tRNA(Cys) + L-cysteine + ATP = L-cysteinyl-tRNA(Cys) + AMP + diphosphate. The polypeptide is Cysteine--tRNA ligase (Chlamydia felis (strain Fe/C-56) (Chlamydophila felis)).